Here is a 361-residue protein sequence, read N- to C-terminus: Chorismate synthase (361 aa).

Residues Arg48 and Arg54 each coordinate NADP(+). FMN-binding positions include 125–127 (RSS), 238–239 (NA), Gly278, 293–297 (KPTSS), and Arg319.

This sequence belongs to the chorismate synthase family. Homotetramer. The cofactor is FMNH2.

The catalysed reaction is 5-O-(1-carboxyvinyl)-3-phosphoshikimate = chorismate + phosphate. It participates in metabolic intermediate biosynthesis; chorismate biosynthesis; chorismate from D-erythrose 4-phosphate and phosphoenolpyruvate: step 7/7. Its function is as follows. Catalyzes the anti-1,4-elimination of the C-3 phosphate and the C-6 proR hydrogen from 5-enolpyruvylshikimate-3-phosphate (EPSP) to yield chorismate, which is the branch point compound that serves as the starting substrate for the three terminal pathways of aromatic amino acid biosynthesis. This reaction introduces a second double bond into the aromatic ring system. The polypeptide is Chorismate synthase (Pectobacterium atrosepticum (strain SCRI 1043 / ATCC BAA-672) (Erwinia carotovora subsp. atroseptica)).